We begin with the raw amino-acid sequence, 230 residues long: Demethylmenaquinone methyltransferase (230 aa).

S-adenosyl-L-methionine is bound by residues T62, D80, 100–101 (DG), and S117.

It belongs to the class I-like SAM-binding methyltransferase superfamily. MenG/UbiE family.

The catalysed reaction is a 2-demethylmenaquinol + S-adenosyl-L-methionine = a menaquinol + S-adenosyl-L-homocysteine + H(+). Its pathway is quinol/quinone metabolism; menaquinone biosynthesis; menaquinol from 1,4-dihydroxy-2-naphthoate: step 2/2. Methyltransferase required for the conversion of demethylmenaquinol (DMKH2) to menaquinol (MKH2). In Corynebacterium glutamicum (strain ATCC 13032 / DSM 20300 / JCM 1318 / BCRC 11384 / CCUG 27702 / LMG 3730 / NBRC 12168 / NCIMB 10025 / NRRL B-2784 / 534), this protein is Demethylmenaquinone methyltransferase.